Here is a 187-residue protein sequence, read N- to C-terminus: Ribosome-recycling factor (187 aa).

It belongs to the RRF family.

Its subcellular location is the cytoplasm. In terms of biological role, responsible for the release of ribosomes from messenger RNA at the termination of protein biosynthesis. May increase the efficiency of translation by recycling ribosomes from one round of translation to another. This Methylobacterium sp. (strain 4-46) protein is Ribosome-recycling factor.